The following is a 183-amino-acid chain: Ribosomal RNA small subunit methyltransferase G (183 aa).

S-adenosyl-L-methionine contacts are provided by residues glycine 60, phenylalanine 65, 111 to 112 (IE), and arginine 125.

Belongs to the methyltransferase superfamily. RNA methyltransferase RsmG family.

The protein resides in the cytoplasm. It catalyses the reaction guanosine(527) in 16S rRNA + S-adenosyl-L-methionine = N(7)-methylguanosine(527) in 16S rRNA + S-adenosyl-L-homocysteine. Specifically methylates the N7 position of guanine in position 527 of 16S rRNA. In Campylobacter hominis (strain ATCC BAA-381 / DSM 21671 / CCUG 45161 / LMG 19568 / NCTC 13146 / CH001A), this protein is Ribosomal RNA small subunit methyltransferase G.